A 197-amino-acid chain; its full sequence is Xanthine phosphoribosyltransferase (197 aa).

Residues leucine 20 and asparagine 27 each contribute to the xanthine site. 128 to 132 (ANGQA) serves as a coordination point for 5-phospho-alpha-D-ribose 1-diphosphate. Residue lysine 156 participates in xanthine binding.

It belongs to the purine/pyrimidine phosphoribosyltransferase family. Xpt subfamily. As to quaternary structure, homodimer.

The protein resides in the cytoplasm. It catalyses the reaction XMP + diphosphate = xanthine + 5-phospho-alpha-D-ribose 1-diphosphate. It functions in the pathway purine metabolism; XMP biosynthesis via salvage pathway; XMP from xanthine: step 1/1. Functionally, converts the preformed base xanthine, a product of nucleic acid breakdown, to xanthosine 5'-monophosphate (XMP), so it can be reused for RNA or DNA synthesis. This Bacillus cereus (strain ATCC 14579 / DSM 31 / CCUG 7414 / JCM 2152 / NBRC 15305 / NCIMB 9373 / NCTC 2599 / NRRL B-3711) protein is Xanthine phosphoribosyltransferase.